The chain runs to 561 residues: Centromere protein T (561 aa).

A disordered region spans residues 1-83 (MADHNPDSDS…HIQASGHLEE (83 aa)). Residues 18–27 (RVLDTADPRT) show a composition bias toward basic and acidic residues. Low complexity predominate over residues 34-46 (ARAGARRALLETA). S47 bears the Phosphoserine mark. T85 carries the post-translational modification Phosphothreonine. Residues 93–421 (ILLTAPESSI…RHHQFLEPAP (329 aa)) are flexible stalk domain. Disordered stretches follow at residues 256 to 292 (HSLP…PGKP) and 333 to 457 (AEKK…DPHK). Over residues 276-288 (KTQSSGPGLQKNS) the composition is skewed to polar residues. Residues S343, S345, and S356 each carry the phosphoserine modification. Residues 357-367 (RVEEAEGHTEV) are compositionally biased toward basic and acidic residues. A phosphoserine mark is found at S373, S385, S386, and S397. Residues 395–407 (AASPESASSTPES) are compositionally biased toward low complexity.

This sequence belongs to the CENP-T/CNN1 family. Component of the CENPA-CAD complex, composed of CENPI, CENPK, CENPL, CENPO, CENPP, CENPQ, CENPR and CENPS. The CENPA-CAD complex is probably recruited on centromeres by the CENPA-NAC complex, at least composed of CENPA, CENPC, CENPH, CENPM, CENPN, CENPT and CENPU. Identified in a centromeric complex containing histones H2A, H2B, H3 and H4, and at least CENPA, CENPB, CENPC, CENPT, CENPN, HJURP, SUPT16H, SSRP1 and RSF1. Interacts (via N-terminus) with the NDC80 complex. Heterodimer with CENPW; this dimer coassembles with CENPS-CENPX heterodimers at centromeres to form the tetrameric CENP-T-W-S-X complex. In terms of processing, dynamically phosphorylated at Ser-47 and probably also other sites during the cell cycle. Phosphorylated at Ser-47 during G2 phase, metaphase and anaphase, but not during telophase or G1 phase.

It is found in the nucleus. The protein localises to the chromosome. The protein resides in the centromere. Its subcellular location is the kinetochore. Functionally, component of the CENPA-NAC (nucleosome-associated) complex, a complex that plays a central role in assembly of kinetochore proteins, mitotic progression and chromosome segregation. The CENPA-NAC complex recruits the CENPA-CAD (nucleosome distal) complex and may be involved in incorporation of newly synthesized CENPA into centromeres. Part of a nucleosome-associated complex that binds specifically to histone H3-containing nucleosomes at the centromere, as opposed to nucleosomes containing CENPA. Component of the heterotetrameric CENP-T-W-S-X complex that binds and supercoils DNA, and plays an important role in kinetochore assembly. CENPT has a fundamental role in kinetochore assembly and function. It is one of the inner kinetochore proteins, with most further proteins binding downstream. Required for normal chromosome organization and normal progress through mitosis. The polypeptide is Centromere protein T (CENPT) (Homo sapiens (Human)).